We begin with the raw amino-acid sequence, 313 residues long: PGR5-like protein 1B, chloroplastic (313 aa).

A chloroplast-targeting transit peptide spans 1-49 (MAFTLTIPRFSAISRKPITCSSSRTQCPAPFTHGRSISLRRRLTLLPLK). Ala50 carries the N-acetylalanine modification. Residues 50 to 187 (ASTDQSGQVG…KVYSDLAIDY (138 aa)) lie on the Stromal side of the membrane. A disulfide bridge connects residues Cys71 and Cys172. The chain crosses the membrane as a helical span at residues 188-208 (FKMFLLNVPATVVALGLFFFL). At 209-225 (DDITGFEITYLLELPEP) the chain is on the lumenal, thylakoid side. The chain crosses the membrane as a helical span at residues 226 to 246 (FSFIFTWFAAVPAIVYLALSL). Over 247-313 (TKLILKDFLI…LITLPEGGKA (67 aa)) the chain is Stromal.

It belongs to the PGR5 family. As to quaternary structure, homodimer and heterodimer with PGR5. Interacts with PGR5, FD2, psaD1, LFNR1 and LFNR2. Also interacts with petC and a Fe-containing cofactor (FCC). Post-translationally, disulfide bonds; Cys-289 and Cys-292 are probably involved in the formation of disulfide bridges with 'Cys-11' and 'Cys-105' of PGR5 while Cys-261 and Cys-264 are probably involved in the binding of a Fe-containing cofactor (FCC).

Its subcellular location is the plastid. It is found in the chloroplast thylakoid membrane. Its activity is regulated as follows. Inhibited by antimycin A. In terms of biological role, ferredoxin-plastoquinone reductase involved in cyclic electron flow (CEF) around photosystem I. The homodimer is probably not involved in CEF. The sequence is that of PGR5-like protein 1B, chloroplastic (PGRL1B) from Arabidopsis thaliana (Mouse-ear cress).